Here is a 316-residue protein sequence, read N- to C-terminus: UDP-N-acetylenolpyruvoylglucosamine reductase (316 aa).

The FAD-binding PCMH-type domain occupies 27–225; sequence VGGKAERFYR…KTAINALLKK (199 aa). The active site involves Arg190. Ser239 functions as the Proton donor in the catalytic mechanism. Glu309 is a catalytic residue.

It belongs to the MurB family. FAD is required as a cofactor.

Its subcellular location is the cytoplasm. It carries out the reaction UDP-N-acetyl-alpha-D-muramate + NADP(+) = UDP-N-acetyl-3-O-(1-carboxyvinyl)-alpha-D-glucosamine + NADPH + H(+). The protein operates within cell wall biogenesis; peptidoglycan biosynthesis. Its function is as follows. Cell wall formation. In Coxiella burnetii (strain CbuK_Q154) (Coxiella burnetii (strain Q154)), this protein is UDP-N-acetylenolpyruvoylglucosamine reductase.